A 216-amino-acid polypeptide reads, in one-letter code: Ornithine decarboxylase antizyme 1 (216 aa).

This sequence belongs to the ODC antizyme family. As to quaternary structure, interacts with ODC1 and thereby sterically blocks ODC homodimerization.

In terms of biological role, ornithine decarboxylase (ODC) antizyme protein that negatively regulates ODC activity and intracellular polyamine biosynthesis and uptake in response to increased intracellular polyamine levels. Binds to ODC monomers, inhibiting the assembly of the functional ODC homodimer, and targets the monomers for ubiquitin-independent proteolytic destruction by the 26S proteasome. The sequence is that of Ornithine decarboxylase antizyme 1 (oaz1) from Xenopus laevis (African clawed frog).